The sequence spans 314 residues: Phosphoribosylaminoimidazole-succinocarboxamide synthase (314 aa).

It belongs to the SAICAR synthetase family.

The catalysed reaction is 5-amino-1-(5-phospho-D-ribosyl)imidazole-4-carboxylate + L-aspartate + ATP = (2S)-2-[5-amino-1-(5-phospho-beta-D-ribosyl)imidazole-4-carboxamido]succinate + ADP + phosphate + 2 H(+). Its pathway is purine metabolism; IMP biosynthesis via de novo pathway; 5-amino-1-(5-phospho-D-ribosyl)imidazole-4-carboxamide from 5-amino-1-(5-phospho-D-ribosyl)imidazole-4-carboxylate: step 1/2. The polypeptide is Phosphoribosylaminoimidazole-succinocarboxamide synthase (Bacteroides fragilis (strain ATCC 25285 / DSM 2151 / CCUG 4856 / JCM 11019 / LMG 10263 / NCTC 9343 / Onslow / VPI 2553 / EN-2)).